A 491-amino-acid polypeptide reads, in one-letter code: Cytochrome P450 81F2 (491 aa).

A helical membrane pass occupies residues 283–303; it reads VIIKGLMLSMMLAGTDTAAVT. Cys429 contributes to the heme binding site.

It belongs to the cytochrome P450 family. Heme serves as cofactor.

The protein localises to the membrane. It functions in the pathway secondary metabolite biosynthesis. Involved in indole glucosinolate biosynthesis. Catalyzes hydroxylation reactions of the glucosinolate indole ring. Converts indol-3-yl-methylglucosinolate (I3M) to 4-hydroxy-indol-3-yl-methylglucosinolate (4OH-I3M) and/or 1-hydroxy-indol-3-yl-methylglucosinolate (1OH-I3M) intermediates. These hydroxy intermediates are converted to 4-methoxy-indol-3-yl-methylglucosinolate (4MO-I3M) and 1-methoxy-indol-3-yl-methylglucosinolate (1MO-I3M) by indole glucosinolate methyltransferase 1 and 2 (IGMT1 and IGMT2). Contributes to defense against the green peach aphid (Myzus persicae), a generalist phloem-feeding herbivore. Required for the biosynthesis of antifungal indole glucosinolate metabolites. Required for the pathogen-induced accumulation of 4MO-I3M, which in turn is activated by the atypical BGLU26/PEN2 myrosinase. Required for the biosynthesis of Trp-derived antifungal compounds and non-host resistance to the necrotrophic fungal pathogen Plectosphaerella cucumerina. Required for resistance to the non-adapted fungal pathogen Colletotrichum gloeosporioides. The polypeptide is Cytochrome P450 81F2 (Arabidopsis thaliana (Mouse-ear cress)).